The primary structure comprises 273 residues: Ribosomal RNA small subunit methyltransferase A (273 aa).

6 residues coordinate S-adenosyl-L-methionine: Asn18, Leu20, Gly45, Glu66, Asp91, and Asn113.

This sequence belongs to the class I-like SAM-binding methyltransferase superfamily. rRNA adenine N(6)-methyltransferase family. RsmA subfamily.

The protein resides in the cytoplasm. It carries out the reaction adenosine(1518)/adenosine(1519) in 16S rRNA + 4 S-adenosyl-L-methionine = N(6)-dimethyladenosine(1518)/N(6)-dimethyladenosine(1519) in 16S rRNA + 4 S-adenosyl-L-homocysteine + 4 H(+). Specifically dimethylates two adjacent adenosines (A1518 and A1519) in the loop of a conserved hairpin near the 3'-end of 16S rRNA in the 30S particle. May play a critical role in biogenesis of 30S subunits. This chain is Ribosomal RNA small subunit methyltransferase A, found in Escherichia coli (strain SE11).